The primary structure comprises 2036 residues: Proline-rich protein 12 (2036 aa).

Disordered regions lie at residues 210 to 283, 331 to 587, and 649 to 697; these read GGGV…RALP, CSPL…GAPG, and APSP…DPQR. Positions 223 to 240 are enriched in pro residues; sequence QTPPYRPGPPDPPPPPRH. Residues 249 to 258 are compositionally biased toward low complexity; it reads ASSSAAAAAA. Phosphoserine occurs at positions 332 and 340. Positions 340–365 are enriched in low complexity; it reads SPGAGEPSKAGPSGATAGASGRATGP. Gly residues-rich tracts occupy residues 367–380 and 391–400; these read AAGG…GGGY and TGKGGYGAAA. 2 stretches are compositionally biased toward low complexity: residues 411-432 and 441-458; these read STAT…TGKA and QAYS…QAYG. Residues 479–490 are compositionally biased toward pro residues; it reads PPQPPSGPPPPG. Polar residues-rich tracts occupy residues 493–504 and 523–537; these read TCQSYSPDQLQG and GLPT…STGH. Residues 543–558 show a composition bias toward gly residues; it reads GHGGGWGPSSLGGGGE. Phosphoserine is present on S651. The span at 673 to 683 shows a compositional bias: gly residues; it reads GLGGSGGAGGP. T738 carries the post-translational modification Phosphothreonine. Disordered regions lie at residues 758–850, 859–878, 886–925, and 952–1068; these read AFLQ…PLQL, LEPA…DPPG, ALEP…KAPR, and EMFG…CSTK. Residues 802-817 show a composition bias toward low complexity; it reads LPSVLSHAPSPSPSAS. A compositionally biased stretch (pro residues) spans 833-847; the sequence is PQPPPPPPPPPPPMP. Residue S865 is modified to Phosphoserine. Positions 1037 to 1052 are enriched in pro residues; that stretch reads AAPPPPPPPPPPPAPA. Residues S1077 and S1135 each carry the phosphoserine modification. Disordered stretches follow at residues 1120-1260, 1294-1347, 1376-1573, and 1668-1840; these read RLPD…SLTR, RHPP…GGAL, TLPS…GEGI, and HRPP…PGRL. Over residues 1182 to 1194 the composition is skewed to low complexity; that stretch reads PTTAGPASASTPT. Positions 1199 to 1208 are enriched in basic residues; the sequence is KPRGRGRGRG. Residues 1209–1223 show a composition bias toward basic and acidic residues; it reads RKAEEAGGTRLEPLK. An N6-acetyllysine modification is found at K1223. Polar residues predominate over residues 1239 to 1257; the sequence is GTSSGDAISGTDHNSLDSS. T1304 carries the phosphothreonine modification. 2 stretches are compositionally biased toward pro residues: residues 1306–1317 and 1324–1338; these read PLSPPKSVPPSV and PQPP…PPPS. Position 1308 is a phosphoserine (S1308). S1381, S1382, and S1387 each carry phosphoserine. 2 stretches are compositionally biased toward pro residues: residues 1420–1438 and 1458–1535; these read DGPP…PLPG and PPTP…APSP. Positions 1541–1553 are enriched in basic and acidic residues; it reads PDTRPLHLAKKQE. T1561 carries the phosphothreonine modification. Residue S1568 is modified to Phosphoserine. Positions 1691–1703 are enriched in pro residues; the sequence is APPPKAPAPPPKP. 2 stretches are compositionally biased toward basic and acidic residues: residues 1704 to 1715 and 1737 to 1769; these read ETPEKTTSEKPP and PVEK…RPER. T1705 carries the post-translational modification Phosphothreonine. Over residues 1817–1829 the composition is skewed to low complexity; that stretch reads GSSSDSESSPGAP. S1925 is modified (phosphoserine).

The protein resides in the nucleus. It localises to the postsynaptic density. The protein localises to the synapse. Its subcellular location is the synaptosome. The chain is Proline-rich protein 12 from Homo sapiens (Human).